A 316-amino-acid polypeptide reads, in one-letter code: 4-hydroxy-3-methylbut-2-enyl diphosphate reductase (316 aa).

Cysteine 12 contacts [4Fe-4S] cluster. The (2E)-4-hydroxy-3-methylbut-2-enyl diphosphate site is built by histidine 41 and histidine 74. Residues histidine 41 and histidine 74 each coordinate dimethylallyl diphosphate. Isopentenyl diphosphate is bound by residues histidine 41 and histidine 74. Cysteine 96 provides a ligand contact to [4Fe-4S] cluster. Histidine 124 lines the (2E)-4-hydroxy-3-methylbut-2-enyl diphosphate pocket. A dimethylallyl diphosphate-binding site is contributed by histidine 124. Residue histidine 124 coordinates isopentenyl diphosphate. Glutamate 126 functions as the Proton donor in the catalytic mechanism. Threonine 167 is a binding site for (2E)-4-hydroxy-3-methylbut-2-enyl diphosphate. Cysteine 197 serves as a coordination point for [4Fe-4S] cluster. Residues serine 225, serine 226, asparagine 227, and serine 269 each coordinate (2E)-4-hydroxy-3-methylbut-2-enyl diphosphate. Residues serine 225, serine 226, asparagine 227, and serine 269 each contribute to the dimethylallyl diphosphate site. Isopentenyl diphosphate contacts are provided by serine 225, serine 226, asparagine 227, and serine 269.

It belongs to the IspH family. As to quaternary structure, homodimer. [4Fe-4S] cluster is required as a cofactor.

It catalyses the reaction isopentenyl diphosphate + 2 oxidized [2Fe-2S]-[ferredoxin] + H2O = (2E)-4-hydroxy-3-methylbut-2-enyl diphosphate + 2 reduced [2Fe-2S]-[ferredoxin] + 2 H(+). It carries out the reaction dimethylallyl diphosphate + 2 oxidized [2Fe-2S]-[ferredoxin] + H2O = (2E)-4-hydroxy-3-methylbut-2-enyl diphosphate + 2 reduced [2Fe-2S]-[ferredoxin] + 2 H(+). It functions in the pathway isoprenoid biosynthesis; dimethylallyl diphosphate biosynthesis; dimethylallyl diphosphate from (2E)-4-hydroxy-3-methylbutenyl diphosphate: step 1/1. Its pathway is isoprenoid biosynthesis; isopentenyl diphosphate biosynthesis via DXP pathway; isopentenyl diphosphate from 1-deoxy-D-xylulose 5-phosphate: step 6/6. Catalyzes the conversion of 1-hydroxy-2-methyl-2-(E)-butenyl 4-diphosphate (HMBPP) into a mixture of isopentenyl diphosphate (IPP) and dimethylallyl diphosphate (DMAPP). Acts in the terminal step of the DOXP/MEP pathway for isoprenoid precursor biosynthesis. This chain is 4-hydroxy-3-methylbut-2-enyl diphosphate reductase, found in Pectobacterium carotovorum subsp. carotovorum (strain PC1).